A 63-amino-acid chain; its full sequence is Ct-IT2 (63 aa).

One can recognise an LCN-type CS-alpha/beta domain in the interval 1-63; that stretch reads KDGYPMDSKG…VWDKATNKCG (63 aa). Intrachain disulfides connect Cys11-Cys62, Cys15-Cys36, Cys22-Cys43, and Cys26-Cys45. The residue at position 63 (Gly63) is a Glycine amide.

In terms of tissue distribution, expressed by the venom gland.

It is found in the secreted. Beta toxins bind voltage-independently at site-4 of sodium channels (Nav) and shift the voltage of activation toward more negative potentials thereby affecting sodium channel activation and promoting spontaneous and repetitive firing. Is highly active on insects, since it provokes paralysis and death when injected into crickets. This Centruroides tecomanus (Scorpion) protein is Ct-IT2.